The primary structure comprises 343 residues: Palmitoyltransferase ZDHHC4 (343 aa).

Topologically, residues 1–2 (MD) are lumenal. The chain crosses the membrane as a helical span at residues 3-23 (FLVLFLFYLAFLLICVVLICI). At 24 to 67 (FTKSQRLKAVVLGGAQVCSRVIPQCLQRAVQTLLHQLFHTRHPT) the chain is on the cytoplasmic side. The helical transmembrane segment at 68–88 (FIVLHLLLQGLVYAEYTCEVF) threads the bilayer. Residues 89–100 (GYCRELEFSLPY) are Lumenal-facing. Residues 101 to 121 (LLLPYVLLSVNLVFFTLTCAA) traverse the membrane as a helical segment. The Cytoplasmic portion of the chain corresponds to 122–193 (NPGTITKANE…NCIGAWNTRY (72 aa)). Residues 149 to 199 (SRCPTCDLRKPARSKHCRLCDRCVHRFDHHCVWVNNCIGAWNTRYFLIYLL) form the DHHC domain. Catalysis depends on cysteine 179, which acts as the S-palmitoyl cysteine intermediate. A helical transmembrane segment spans residues 194–214 (FLIYLLTLTASAATIATVTAA). Residues 215-255 (FLLRLVTVSDLYQETYLDDVGHFQAVDTVFLIQHLFLAFPR) are Lumenal-facing. A helical transmembrane segment spans residues 256–276 (IVFLLGFVIVLSMLLAGYLCF). Over 277–343 (ALYLAATNQT…ATPSYKKKEK (67 aa)) the chain is Cytoplasmic. The Di-lysine motif motif lies at 340–343 (KKEK).

It belongs to the DHHC palmitoyltransferase family. As to quaternary structure, interacts with CPT1A.

The protein resides in the endoplasmic reticulum membrane. It is found in the golgi apparatus membrane. Its subcellular location is the cell membrane. It carries out the reaction L-cysteinyl-[protein] + hexadecanoyl-CoA = S-hexadecanoyl-L-cysteinyl-[protein] + CoA. Its function is as follows. Palmitoyltransferase that could catalyze the addition of palmitate onto protein substrates including the D(2) dopamine receptor DRD2, GSK3B or MAVS. Mediates GSK3B palmitoylation to prevent its AKT1-mediated phosphorylation leading to activation of the STAT3 signaling pathway. Also catalyzes MAVS palmitoylation which promotes its stabilization and activation by inhibiting 'Lys-48'- but facilitating 'Lys-63'-linked ubiquitination. The protein is Palmitoyltransferase ZDHHC4 of Mus musculus (Mouse).